The following is a 228-amino-acid chain: MQLSITHPCCWTLRLLLVSNLLLWENVALVPTCLVRNGRCFASLEEMLERAVGLSEEISKQALQLFTEFDNQYAQSKQLINKNFKKCHTSSLELPKPSSTSVQTHPITLLKIASKLLSAWKVPLNDLVNNLPSLKDIHPNILSKAREIEAKSAGLLEGVKSILIQMQNGDTEDENYPGWSGLASLQSENEDDRLFAYYNMIRCEGRETQKVETALKMVKCKISNENNC.

The signal sequence occupies residues 1 to 29; sequence MQLSITHPCCWTLRLLLVSNLLLWENVAL. 2 cysteine pairs are disulfide-bonded: Cys-87–Cys-203 and Cys-220–Cys-228.

This sequence belongs to the somatotropin/prolactin family. As to expression, expressed specifically in the placenta. Highly expressed in invasive trophoblast cells lining the central placental vessel.

It localises to the secreted. The polypeptide is Prolactin-2A1 (Prl2a1) (Rattus norvegicus (Rat)).